We begin with the raw amino-acid sequence, 163 residues long: uncharacterized protein (163 aa).

The tract at residues 142–163 (PQIVISEHNNTKETSPSRQFEH) is disordered. Residues 153-163 (KETSPSRQFEH) show a composition bias toward polar residues.

Belongs to the RCAN family.

Its function is as follows. Inhibits calcineurin-dependent transcriptional responses by binding to the catalytic domain of calcineurin. This is an uncharacterized protein from Schizosaccharomyces pombe (strain 972 / ATCC 24843) (Fission yeast).